The primary structure comprises 248 residues: DNA repair protein RecO (248 aa).

This sequence belongs to the RecO family.

Functionally, involved in DNA repair and RecF pathway recombination. This Rubrobacter xylanophilus (strain DSM 9941 / JCM 11954 / NBRC 16129 / PRD-1) protein is DNA repair protein RecO.